Consider the following 63-residue polypeptide: Toxin S6C6 (63 aa).

5 disulfide bridges follow: Cys3–Cys24, Cys6–Cys11, Cys17–Cys39, Cys43–Cys55, and Cys56–Cys61.

It belongs to the three-finger toxin family. Ancestral subfamily. Orphan group XIX sub-subfamily. As to expression, expressed by the venom gland.

It localises to the secreted. May enhance presynaptic acetylcholine release. The protein is Toxin S6C6 of Dendroaspis jamesoni kaimosae (Eastern Jameson's mamba).